A 104-amino-acid chain; its full sequence is MAANSSGQGFQNKNRVAILAELDKEKRKLLMQNQSSTNHPGASIALSRPSLNKDFRDHAEQQHIAAQQKAALQHAHAHSSGYFITQDSAFGNLILPVLPRLDPE.

Ala2 bears the N-acetylalanine mark. Residue Ser50 is modified to Phosphoserine.

The protein belongs to the SOSS-C family. In terms of assembly, component of the SOSS complex, composed of SOSS-B (SOSS-B1/NABP2 or SOSS-B2/NABP1), SOSS-A/INTS3 and SOSS-C/INIP. SOSS complexes containing SOSS-B1/NABP2 are more abundant than complexes containing SOSS-B2/NABP1. Interacts with INTS3; the interaction is direct.

The protein localises to the nucleus. Component of the SOSS complex, a multiprotein complex that functions downstream of the MRN complex to promote DNA repair and G2/M checkpoint. The SOSS complex associates with single-stranded DNA at DNA lesions and influences diverse endpoints in the cellular DNA damage response including cell-cycle checkpoint activation, recombinational repair and maintenance of genomic stability. Required for efficient homologous recombination-dependent repair of double-strand breaks (DSBs) and ATM-dependent signaling pathways. The sequence is that of SOSS complex subunit C (INIP) from Homo sapiens (Human).